The primary structure comprises 61 residues: uncharacterized protein (61 aa).

This is an uncharacterized protein from Treponema pallidum (strain Nichols).